A 382-amino-acid chain; its full sequence is Pyrimidine monooxygenase RutA (382 aa).

FMN-binding positions include 68 to 69, Asn-134, Glu-143, 159 to 160, and Ser-209; these read IK and RY.

The protein belongs to the NtaA/SnaA/DszA monooxygenase family. RutA subfamily.

It carries out the reaction uracil + FMNH2 + NADH + O2 = (Z)-3-ureidoacrylate + FMN + NAD(+) + H2O + H(+). It catalyses the reaction thymine + FMNH2 + NADH + O2 = (Z)-2-methylureidoacrylate + FMN + NAD(+) + H2O + H(+). Its function is as follows. Catalyzes the pyrimidine ring opening between N-3 and C-4 by an unusual flavin hydroperoxide-catalyzed mechanism, adding oxygen atoms in the process to yield ureidoacrylate peracid, that immediately reacts with FMN forming ureidoacrylate and FMN-N(5)-oxide. The FMN-N(5)-oxide reacts spontaneously with NADH to produce FMN. Requires the flavin reductase RutF to regenerate FMN in vivo. This chain is Pyrimidine monooxygenase RutA, found in Escherichia coli O150:H5 (strain SE15).